Consider the following 372-residue polypeptide: L-selectin (372 aa).

The N-terminal stretch at 1 to 28 is a signal peptide; that stretch reads MIFPWKCQSTQRDLCNIFKLWGWTMLCC. A propeptide spanning residues 29 to 38 is cleaved from the precursor; it reads DFLAHHGTDC. Residues 39–332 lie on the Extracellular side of the membrane; sequence WTYHYSEKPM…FSMIKEGDYN (294 aa). A C-type lectin domain is found at 55–155; it reads RFCRENYTDL…ACHKLKAALC (101 aa). 10 cysteine pairs are disulfide-bonded: Cys-57-Cys-155, Cys-128-Cys-147, Cys-128-Cys-160, Cys-160-Cys-171, Cys-165-Cys-180, Cys-182-Cys-191, Cys-197-Cys-241, Cys-227-Cys-254, Cys-259-Cys-303, and Cys-289-Cys-316. N-linked (GlcNAc...) asparagine glycans are attached at residues Asn-60 and Asn-104. Positions 118, 120, 126, 143, and 144 each coordinate Ca(2+). The region spanning 156–192 is the EGF-like domain; that stretch reads YTASCQPWSCSGHGECVEIINNYTCNCDVGYYGPQCQ. A glycan (N-linked (GlcNAc...) asparagine) is linked at Asn-177. 2 consecutive Sushi domains span residues 195-256 and 257-318; these read IQCE…TCQV and IQCE…ICQK. N-linked (GlcNAc...) asparagine glycans are attached at residues Asn-216, Asn-226, Asn-232, Asn-246, and Asn-271. A helical transmembrane segment spans residues 333–355; sequence PLFIPVAVMVTAFSGLAFIIWLA. The Cytoplasmic portion of the chain corresponds to 356-372; the sequence is RRLKKGKKSKKSMDDPY.

It belongs to the selectin/LECAM family. As to quaternary structure, interaction with SELPLG/PSGL1 and PODXL2 is required for promoting recruitment and rolling of leukocytes. This interaction is dependent on the sialyl Lewis X glycan modification of SELPLG and PODXL2, and tyrosine sulfation modifications of SELPLG. Sulfation on 'Tyr-51' of SELPLG is important for L-selectin binding. N-glycosylated.

It localises to the cell membrane. Calcium-dependent lectin that mediates cell adhesion by binding to glycoproteins on neighboring cells. Mediates the adherence of lymphocytes to endothelial cells of high endothelial venules in peripheral lymph nodes. Promotes initial tethering and rolling of leukocytes in endothelia. This Pongo pygmaeus (Bornean orangutan) protein is L-selectin (SELL).